The primary structure comprises 339 residues: Leucine-rich repeat-containing protein 59 (339 aa).

Topologically, residues Met1–Arg282 are cytoplasmic. LRR repeat units lie at residues Ser10–Pro31, Lys40–Leu61, His63–Leu84, and Ser86–Leu107. The stretch at Met181–Thr254 forms a coiled coil. Residues Ser186–Ser275 form a disordered region. Over residues Glu187 to Gln256 the composition is skewed to basic and acidic residues. Residues Ala283 to Leu300 form a helical membrane-spanning segment. Over Thr301–Gln339 the chain is Lumenal.

As to quaternary structure, interacts with SGO1.

It localises to the microsome membrane. Its subcellular location is the endoplasmic reticulum membrane. It is found in the nucleus envelope. In terms of biological role, required for nuclear import of FGF1. The sequence is that of Leucine-rich repeat-containing protein 59 (LRRC59) from Gallus gallus (Chicken).